Reading from the N-terminus, the 207-residue chain is Strobilurin A biosynthesis cluster protein r1 (207 aa).

2 helical membrane passes run 108–128 (FIFP…LLYL) and 169–189 (NLTT…PFWI).

Its subcellular location is the membrane. The protein operates within mycotoxin biosynthesis. Its function is as follows. Part of the gene cluster that mediates the biosynthesis of strobilurin A, an antifungal polyketide that contains a key beta-methoxyacrylate toxophore that targets the complex III of the mitochondrial electron transport chain. Strobilurin biosynthesis begins with construction of benzoyl CoA by step-wise elimination of ammonia from phenylalanine by the phenylalanine ammonia-lyase str11, oxygenation by str8 and retro-Claisen reaction to form benzoic acid, which is activated to its CoA thiolester benzoyl CoA by the dedicated CoA ligase str10. Benzoyl CoA forms the starter unit for the highly reducing polyketide synthase stpks1 that produces the polyketide prestrobilutin A. The FAD-dependent oxygenase str9 then catalyzes the key oxidative rearrangement responsible for the creation of the beta-methoxyacrylate toxophore. Str9 performs epoxidation of the 2,3 olefin of prestrobilutin A, followed by Meinwald rearrangement to furnish the aldehyde intermediate. Rapid enolization of the aldehyde intermediate would give the beta-methoxyacrylate skeleton and methylations catalyzed by str2 and str3 complete the synthesis and lead to the production of strobilurin A. The short-chain dehydrogenase stl2 and the dehydrogenase str4 play a role in the shunt pathway leading to the production of bolineol. The cluster encodes no obvious halogenase gene that could be involved in production of strobilurin B, nor any obvious dimethylallyl-transferase that could be involved in the production of strobilurin G. It is possible that unknown proteins encoded in, or near, the cluster (such as str1 or stl1) may form new classes of halogenases or dimethylally-transferases, or that the responsible genes are located elsewhere on the genome. Similarly, proteins encoded by str5/str6 hydrolases appear to have no chemical role in the biosynthesis of strobilurin A. Finally, no obvious self-resistance gene is found within the cluster. The protein is Strobilurin A biosynthesis cluster protein r1 of Strobilurus tenacellus.